The primary structure comprises 317 residues: o-succinylbenzoate synthase (317 aa).

Residues 71–73 (NAT) and Lys95 contribute to the 2-succinylbenzoate site. The Proton donor role is filled by Lys97. Mg(2+) is bound by residues Asp128, Glu154, and Asp177. A 2-succinylbenzoate-binding site is contributed by 128–130 (DVN). A 2-succinylbenzoate-binding site is contributed by Lys201. Lys201 (proton acceptor) is an active-site residue.

Belongs to the mandelate racemase/muconate lactonizing enzyme family. MenC type 1 subfamily. As to quaternary structure, monomer. Requires a divalent metal cation as cofactor.

It catalyses the reaction (1R,6R)-6-hydroxy-2-succinyl-cyclohexa-2,4-diene-1-carboxylate = 2-succinylbenzoate + H2O. It participates in quinol/quinone metabolism; 1,4-dihydroxy-2-naphthoate biosynthesis; 1,4-dihydroxy-2-naphthoate from chorismate: step 4/7. It functions in the pathway quinol/quinone metabolism; menaquinone biosynthesis. Its function is as follows. Converts 2-succinyl-6-hydroxy-2,4-cyclohexadiene-1-carboxylate (SHCHC) to 2-succinylbenzoate (OSB). Does not show N-succinylamino acid racemase (NSAR) activity with N-succinyl-L-phenylglycine as substrate. This is o-succinylbenzoate synthase from Thermobifida fusca (strain YX).